The following is a 107-amino-acid chain: Protein Rev (107 aa).

Phosphoserine; by host CK2 occurs at positions 5 and 8. The homomultimerization stretch occupies residues 18 to 26; that stretch reads IIKILYQSN. Disordered regions lie at residues 26–50 and 82–107; these read NPYPKPEGTRQARRNRRRRWRARQR and NINCSESGGTSGTQQPQGNTERVGNP. The Nuclear localization signal and RNA-binding (RRE) signature appears at 34-50; sequence TRQARRNRRRRWRARQR. Residues 36 to 50 are compositionally biased toward basic residues; it reads QARRNRRRRWRARQR. Positions 73–84 match the Nuclear export signal and binding to XPO1 motif; it reads FQLPPIERLNIN. Over residues 86–101 the composition is skewed to low complexity; the sequence is SESGGTSGTQQPQGNT. Residue Ser-92 is modified to Phosphoserine; by host.

This sequence belongs to the HIV-1 REV protein family. Homomultimer; when bound to the RRE. Multimeric assembly is essential for activity and may involve XPO1. Binds to human KPNB1, XPO1, TNPO1, RANBP5 and IPO7. Interacts with the viral Integrase. Interacts with human KHDRBS1. Interacts with human NAP1; this interaction decreases Rev multimerization and stimulates its activity. Interacts with human DEAD-box helicases DDX3 and DDX24; these interactions may serve for viral RNA export to the cytoplasm and packaging, respectively. Interacts with human PSIP1; this interaction may inhibit HIV-1 DNA integration by promoting dissociation of the Integrase-LEDGF/p75 complex. Post-translationally, asymmetrically arginine dimethylated at one site by host PRMT6. Methylation impairs the RNA-binding activity and export of viral RNA from the nucleus to the cytoplasm. Phosphorylated by protein kinase CK2. Presence of, and maybe binding to the N-terminus of the regulatory beta subunit of CK2 is necessary for CK2-mediated Rev's phosphorylation.

It localises to the host nucleus. It is found in the host nucleolus. The protein localises to the host cytoplasm. In terms of biological role, escorts unspliced or incompletely spliced viral pre-mRNAs (late transcripts) out of the nucleus of infected cells. These pre-mRNAs carry a recognition sequence called Rev responsive element (RRE) located in the env gene, that is not present in fully spliced viral mRNAs (early transcripts). This function is essential since most viral proteins are translated from unspliced or partially spliced pre-mRNAs which cannot exit the nucleus by the pathway used by fully processed cellular mRNAs. Rev itself is translated from a fully spliced mRNA that readily exits the nucleus. Rev's nuclear localization signal (NLS) binds directly to KPNB1/Importin beta-1 without previous binding to KPNA1/Importin alpha-1. KPNB1 binds to the GDP bound form of RAN (Ran-GDP) and targets Rev to the nucleus. In the nucleus, the conversion from Ran-GDP to Ran-GTP dissociates Rev from KPNB1 and allows Rev's binding to the RRE in viral pre-mRNAs. Rev multimerization on the RRE via cooperative assembly exposes its nuclear export signal (NES) to the surface. Rev can then form a complex with XPO1/CRM1 and Ran-GTP, leading to nuclear export of the complex. Conversion from Ran-GTP to Ran-GDP mediates dissociation of the Rev/RRE/XPO1/RAN complex, so that Rev can return to the nucleus for a subsequent round of export. Beside KPNB1, also seems to interact with TNPO1/Transportin-1, RANBP5/IPO5 and IPO7/RANBP7 for nuclear import. The nucleoporin-like HRB/RIP is an essential cofactor that probably indirectly interacts with Rev to release HIV RNAs from the perinuclear region to the cytoplasm. The chain is Protein Rev from Human immunodeficiency virus type 1 group M subtype C (isolate 92BR025) (HIV-1).